The primary structure comprises 440 residues: Beta-1,3-galactosyl-O-glycosyl-glycoprotein beta-1,6-N-acetylglucosaminyltransferase 3 (440 aa).

The Cytoplasmic segment spans residues 1–12; that stretch reads MKMTGWKKKLCR. A helical; Signal-anchor for type II membrane protein membrane pass occupies residues 13-30; it reads GHHLWALGCYMLLAVVAL. Topologically, residues 31 to 440 are lumenal; that stretch reads RLSLRLKCDV…RHKAIYGTEL (410 aa). 2 N-linked (GlcNAc...) asparagine glycosylation sites follow: Asn72 and Asn108. 4 cysteine pairs are disulfide-bonded: Cys73/Cys230, Cys164/Cys384, Cys185/Cys212, and Cys393/Cys425.

It belongs to the glycosyltransferase 14 family. Post-translationally, N-glycosylated. As to expression, primarily expressed in mucus-secreting tissues.

Its subcellular location is the golgi apparatus membrane. The enzyme catalyses a 3-O-[beta-D-galactosyl-(1-&gt;3)-N-acetyl-alpha-D-galactosaminyl]-L-seryl-[protein] + UDP-N-acetyl-alpha-D-glucosamine = 3-O-{beta-D-galactosyl-(1-&gt;3)-[N-acetyl-beta-D-glucosaminyl-(1-&gt;6)]-N-acetyl-alpha-D-galactosaminyl}-L-seryl-[protein] + UDP + H(+). It carries out the reaction a 3-O-[beta-D-galactosyl-(1-&gt;3)-N-acetyl-alpha-D-galactosaminyl]-L-threonyl-[protein] + UDP-N-acetyl-alpha-D-glucosamine = a 3-O-{beta-D-galactosyl-(1-&gt;3)-[N-acetyl-beta-D-glucosaminyl-(1-&gt;6)]-N-acetyl-alpha-D-galactosaminyl}-L-threonyl-[protein] + UDP + H(+). The catalysed reaction is a beta-D-Gal-(1-&gt;4)-beta-D-GlcNAc-(1-&gt;3)-beta-D-Gal-(1-&gt;4)-beta-D-GlcNAc derivative + UDP-N-acetyl-alpha-D-glucosamine = a beta-D-Gal-(1-&gt;4)-beta-D-GlcNAc-(1-&gt;3)-[beta-D-GlcNAc-(1-&gt;6)]-beta-D-Gal-(1-&gt;4)-N-acetyl-beta-D-glucosaminyl derivative + UDP + H(+). It catalyses the reaction 3-O-[N-acetyl-beta-D-glucosaminyl-(1-&gt;3)-N-acetyl-alpha-D-galactosaminyl]-L-seryl-[protein] + UDP-N-acetyl-alpha-D-glucosamine = 3-O-[N-acetyl-beta-D-glucosaminyl-(1-&gt;3)-[N-acetyl-beta-D-glucosaminyl-(1-&gt;6)]-N-acetyl-alpha-D-galactosaminyl]-L-seryl-[protein] + UDP + H(+). The enzyme catalyses a 3-O-[N-acetyl-beta-D-glucosaminyl-(1-&gt;3)-N-acetyl-alpha-D-galactosaminyl]-L-threonyl-[protein] + UDP-N-acetyl-alpha-D-glucosamine = 3-O-[N-acetyl-beta-D-glucosaminyl-(1-&gt;3)-[N-acetyl-beta-D-glucosaminyl-(1-&gt;6)]-N-acetyl-alpha-D-galactosaminyl]-L-threonyl-[protein] + UDP + H(+). Its pathway is protein modification; protein glycosylation. In terms of biological role, glycosyltransferase that can synthesize all known mucin beta 6 N-acetylglucosaminides. Mediates core 2 and core 4 O-glycan branching, 2 important steps in mucin-type biosynthesis. Also has I-branching enzyme activity by converting linear into branched poly-N-acetyllactosaminoglycans, leading to introduce the blood group I antigen during embryonic development. In Bos taurus (Bovine), this protein is Beta-1,3-galactosyl-O-glycosyl-glycoprotein beta-1,6-N-acetylglucosaminyltransferase 3 (GCNT3).